We begin with the raw amino-acid sequence, 338 residues long: Holliday junction branch migration complex subunit RuvB (338 aa).

The interval 4–184 (ADRLMSAAAV…FGIVQRLEFY (181 aa)) is large ATPase domain (RuvB-L). Residues Ile23, Arg24, Gly65, Lys68, Thr69, Thr70, 131–133 (EDY), Arg174, Tyr184, and Arg221 contribute to the ATP site. Thr69 serves as a coordination point for Mg(2+). The interval 185–255 (QTGDLQHIVS…VAVSALNMLN (71 aa)) is small ATPAse domain (RuvB-S). Residues 258 to 338 (TEGFDFMDRK…GLEEHGGDPE (81 aa)) form a head domain (RuvB-H) region. Residues Arg294, Arg313, and Arg318 each coordinate DNA.

This sequence belongs to the RuvB family. In terms of assembly, homohexamer. Forms an RuvA(8)-RuvB(12)-Holliday junction (HJ) complex. HJ DNA is sandwiched between 2 RuvA tetramers; dsDNA enters through RuvA and exits via RuvB. An RuvB hexamer assembles on each DNA strand where it exits the tetramer. Each RuvB hexamer is contacted by two RuvA subunits (via domain III) on 2 adjacent RuvB subunits; this complex drives branch migration. In the full resolvosome a probable DNA-RuvA(4)-RuvB(12)-RuvC(2) complex forms which resolves the HJ.

Its subcellular location is the cytoplasm. The enzyme catalyses ATP + H2O = ADP + phosphate + H(+). In terms of biological role, the RuvA-RuvB-RuvC complex processes Holliday junction (HJ) DNA during genetic recombination and DNA repair, while the RuvA-RuvB complex plays an important role in the rescue of blocked DNA replication forks via replication fork reversal (RFR). RuvA specifically binds to HJ cruciform DNA, conferring on it an open structure. The RuvB hexamer acts as an ATP-dependent pump, pulling dsDNA into and through the RuvAB complex. RuvB forms 2 homohexamers on either side of HJ DNA bound by 1 or 2 RuvA tetramers; 4 subunits per hexamer contact DNA at a time. Coordinated motions by a converter formed by DNA-disengaged RuvB subunits stimulates ATP hydrolysis and nucleotide exchange. Immobilization of the converter enables RuvB to convert the ATP-contained energy into a lever motion, pulling 2 nucleotides of DNA out of the RuvA tetramer per ATP hydrolyzed, thus driving DNA branch migration. The RuvB motors rotate together with the DNA substrate, which together with the progressing nucleotide cycle form the mechanistic basis for DNA recombination by continuous HJ branch migration. Branch migration allows RuvC to scan DNA until it finds its consensus sequence, where it cleaves and resolves cruciform DNA. The polypeptide is Holliday junction branch migration complex subunit RuvB (Sodalis glossinidius (strain morsitans)).